Reading from the N-terminus, the 295-residue chain is Pyridoxal 5'-phosphate synthase subunit PdxS (295 aa).

D-ribose 5-phosphate is bound at residue aspartate 23. Lysine 80 acts as the Schiff-base intermediate with D-ribose 5-phosphate in catalysis. Glycine 152 provides a ligand contact to D-ribose 5-phosphate. Arginine 164 is a binding site for D-glyceraldehyde 3-phosphate. D-ribose 5-phosphate-binding positions include glycine 213 and glycine 234–serine 235.

Belongs to the PdxS/SNZ family. In terms of assembly, in the presence of PdxT, forms a dodecamer of heterodimers.

The enzyme catalyses aldehydo-D-ribose 5-phosphate + D-glyceraldehyde 3-phosphate + L-glutamine = pyridoxal 5'-phosphate + L-glutamate + phosphate + 3 H2O + H(+). It functions in the pathway cofactor biosynthesis; pyridoxal 5'-phosphate biosynthesis. Its function is as follows. Catalyzes the formation of pyridoxal 5'-phosphate from ribose 5-phosphate (RBP), glyceraldehyde 3-phosphate (G3P) and ammonia. The ammonia is provided by the PdxT subunit. Can also use ribulose 5-phosphate and dihydroxyacetone phosphate as substrates, resulting from enzyme-catalyzed isomerization of RBP and G3P, respectively. In Methanopyrus kandleri (strain AV19 / DSM 6324 / JCM 9639 / NBRC 100938), this protein is Pyridoxal 5'-phosphate synthase subunit PdxS.